The following is a 626-amino-acid chain: Serine/threonine-protein kinase PknH (626 aa).

Topologically, residues 1 to 403 (MSDAQDSRVG…QTPRKTNPWP (403 aa)) are cytoplasmic. Residues 16–276 (YHLKRLLGRG…DLALAAHEAL (261 aa)) form the Protein kinase domain. Residues 22-30 (LGRGGMGEV) and lysine 45 each bind ATP. Catalysis depends on aspartate 139, which acts as the Proton acceptor. Threonine 170 carries the phosphothreonine modification. Residues 292-396 (QESTLPAPPK…GGPSPWAQTP (105 aa)) form a disordered region. Pro residues-rich tracts occupy residues 297 to 308 (PAPPKPVPPPTM) and 316 to 342 (RQPP…PAQP). Low complexity predominate over residues 343 to 355 (GPAGQRPGPTGQP). Residues 404–424 (LVAGAAAVVLVLVLGAIGIWI) form a helical membrane-spanning segment. Over 425–626 (AIRPKPVQPP…AKIVDKVNKE (202 aa)) the chain is Extracellular. 2 disulfides stabilise this stretch: cysteine 482-cysteine 545 and cysteine 587-cysteine 604.

This sequence belongs to the protein kinase superfamily. Ser/Thr protein kinase family. A divalent metal cation serves as cofactor. In terms of processing, autophosphorylated on threonine and serine residues. Dephosphorylated by PstP.

Its subcellular location is the cell membrane. It catalyses the reaction L-seryl-[protein] + ATP = O-phospho-L-seryl-[protein] + ADP + H(+). It carries out the reaction L-threonyl-[protein] + ATP = O-phospho-L-threonyl-[protein] + ADP + H(+). Its activity is regulated as follows. Inhibited by the kinase inhibitors staurosporine and H-7. In terms of biological role, may regulate bacterial growth in response to external signals to facilitate adaptation to the host environment. In vitro, phosphorylates several substrates such as EmbR, DevR (DosR), DacB1 and Rv0681. The sequence is that of Serine/threonine-protein kinase PknH (pknH) from Mycobacterium tuberculosis (strain ATCC 25618 / H37Rv).